A 299-amino-acid chain; its full sequence is Acetaldehyde dehydrogenase (299 aa).

11–14 (SGNI) serves as a coordination point for NAD(+). Catalysis depends on cysteine 126, which acts as the Acyl-thioester intermediate. Residues 157–165 (SAGPGTRAN) and asparagine 267 each bind NAD(+).

This sequence belongs to the acetaldehyde dehydrogenase family.

The catalysed reaction is acetaldehyde + NAD(+) + CoA = acetyl-CoA + NADH + H(+). In Bacillus cereus (strain ATCC 10987 / NRS 248), this protein is Acetaldehyde dehydrogenase.